Consider the following 277-residue polypeptide: Chitosanase (277 aa).

Positions 1–35 (MKISMQKADFWKKAAISLLVFTMFFTLMMSETVFA) are cleaved as a signal peptide. Residue E54 is the Proton donor of the active site. The active-site Nucleophile is D70.

This sequence belongs to the glycosyl hydrolase 46 family.

It is found in the secreted. It catalyses the reaction Endohydrolysis of beta-(1-&gt;4)-linkages between D-glucosamine residues in a partly acetylated chitosan.. Its function is as follows. Aids in the defense against invading fungal pathogens by degrading their cell wall chitosan. This chain is Chitosanase (csn), found in Bacillus subtilis (strain 168).